Reading from the N-terminus, the 274-residue chain is 23S rRNA (adenosine(1067)-2'-O)-methyltransferase (274 aa).

S-adenosyl-L-methionine-binding positions include Arg165, Leu195, 218 to 220, 238 to 240, and 247 to 252; these read GSE, IPM, and LNVSVS.

This sequence belongs to the class IV-like SAM-binding methyltransferase superfamily. RNA methyltransferase TsnR/AvirB family. In terms of assembly, homodimer.

The enzyme catalyses adenosine(1067) in 23S rRNA + S-adenosyl-L-methionine = 2'-O-methyladenosine(1067) in 23S rRNA + S-adenosyl-L-homocysteine + H(+). Its function is as follows. Specifically methylates the adenosine-1067 in 23S ribosomal RNA. Confers resistance to antibiotic nosiheptide. The polypeptide is 23S rRNA (adenosine(1067)-2'-O)-methyltransferase (Streptomyces actuosus).